The chain runs to 579 residues: CTP synthase (579 aa).

An amidoligase domain region spans residues 1 to 281 (MPALRKHPQT…DAYVVRRLNL (281 aa)). Residue serine 23 coordinates CTP. Residue serine 23 coordinates UTP. ATP-binding positions include 24–29 (SLGKGL) and aspartate 81. Mg(2+) is bound by residues aspartate 81 and glutamate 155. CTP is bound by residues 162–164 (DIE), 202–207 (KTKPTQ), and lysine 238. Residues 202 to 207 (KTKPTQ) and lysine 238 each bind UTP. Residues 306 to 554 (RIALVGKYID…IGAALDYKAA (249 aa)) enclose the Glutamine amidotransferase type-1 domain. Glycine 369 contacts L-glutamine. Catalysis depends on cysteine 396, which acts as the Nucleophile; for glutamine hydrolysis. Residues 397-400 (LGLQ), glutamate 419, and arginine 480 contribute to the L-glutamine site. Residues histidine 527 and glutamate 529 contribute to the active site.

The protein belongs to the CTP synthase family. As to quaternary structure, homotetramer.

The enzyme catalyses UTP + L-glutamine + ATP + H2O = CTP + L-glutamate + ADP + phosphate + 2 H(+). It catalyses the reaction L-glutamine + H2O = L-glutamate + NH4(+). The catalysed reaction is UTP + NH4(+) + ATP = CTP + ADP + phosphate + 2 H(+). It functions in the pathway pyrimidine metabolism; CTP biosynthesis via de novo pathway; CTP from UDP: step 2/2. Its activity is regulated as follows. Allosterically activated by GTP, when glutamine is the substrate; GTP has no effect on the reaction when ammonia is the substrate. The allosteric effector GTP functions by stabilizing the protein conformation that binds the tetrahedral intermediate(s) formed during glutamine hydrolysis. Inhibited by the product CTP, via allosteric rather than competitive inhibition. Its function is as follows. Catalyzes the ATP-dependent amination of UTP to CTP with either L-glutamine or ammonia as the source of nitrogen. Regulates intracellular CTP levels through interactions with the four ribonucleotide triphosphates. This is CTP synthase from Mycobacterium sp. (strain KMS).